The sequence spans 142 residues: Large ribosomal subunit protein uL13 (142 aa).

Belongs to the universal ribosomal protein uL13 family. In terms of assembly, part of the 50S ribosomal subunit.

In terms of biological role, this protein is one of the early assembly proteins of the 50S ribosomal subunit, although it is not seen to bind rRNA by itself. It is important during the early stages of 50S assembly. The protein is Large ribosomal subunit protein uL13 of Delftia acidovorans (strain DSM 14801 / SPH-1).